Reading from the N-terminus, the 481-residue chain is Methylenetetrahydrofolate--tRNA-(uracil-5-)-methyltransferase TrmFO (481 aa).

13 to 18 (GGGLAG) lines the FAD pocket.

Belongs to the MnmG family. TrmFO subfamily. The cofactor is FAD.

It localises to the cytoplasm. It catalyses the reaction uridine(54) in tRNA + (6R)-5,10-methylene-5,6,7,8-tetrahydrofolate + NADH + H(+) = 5-methyluridine(54) in tRNA + (6S)-5,6,7,8-tetrahydrofolate + NAD(+). The catalysed reaction is uridine(54) in tRNA + (6R)-5,10-methylene-5,6,7,8-tetrahydrofolate + NADPH + H(+) = 5-methyluridine(54) in tRNA + (6S)-5,6,7,8-tetrahydrofolate + NADP(+). In terms of biological role, catalyzes the folate-dependent formation of 5-methyl-uridine at position 54 (M-5-U54) in all tRNAs. The polypeptide is Methylenetetrahydrofolate--tRNA-(uracil-5-)-methyltransferase TrmFO (Agrobacterium fabrum (strain C58 / ATCC 33970) (Agrobacterium tumefaciens (strain C58))).